We begin with the raw amino-acid sequence, 133 residues long: 14 kDa fatty acid-binding protein (133 aa).

(5Z,8Z,11Z,14Z)-eicosatetraenoate contacts are provided by residues Arg107 and 127–129 (RNY). Residues Arg107 and 127–129 (RNY) contribute to the (9Z)-octadecenoate site.

It belongs to the calycin superfamily. Fatty-acid binding protein (FABP) family. Tubercles, muscle layers and body.

The protein resides in the cytoplasm. Its function is as follows. May play a role in the transport of fatty acids. Binds various fatty acids, such as arachidonic, oleic, palmitic and linolenic acid (in vitro). The sequence is that of 14 kDa fatty acid-binding protein from Schistosoma mansoni (Blood fluke).